The sequence spans 272 residues: Probable protein VP2 (272 aa).

Disordered regions lie at residues 50–116 and 195–272; these read GGSR…DFAD and YSPA…SSSS. The segment covering 78–90 has biased composition (pro residues); it reads APDPPAGNQPPAL. Over residues 94 to 108 the composition is skewed to gly residues; the sequence is GDGGNESGAGGGESG. Residues 218-230 show a composition bias toward basic and acidic residues; the sequence is SKRDNKENRDRGR. Basic residues predominate over residues 231-246; sequence AKARAKQKPKKRRRRA. A compositionally biased stretch (low complexity) spans 249-272; that stretch reads ESSSSSSSKSSFNSEEGSSASSSS.

In terms of processing, phosphorylated at C-terminal serines.

The protein is Probable protein VP2 of Homo sapiens (Human).